Reading from the N-terminus, the 215-residue chain is Somatotropin (215 aa).

The first 25 residues, M1 to A25, serve as a signal peptide directing secretion. Residue H44 participates in Zn(2+) binding. Position 130 is a phosphoserine (S130). E197 serves as a coordination point for Zn(2+).

The protein belongs to the somatotropin/prolactin family.

The protein localises to the secreted. Its function is as follows. Plays an important role in growth control. Its major role in stimulating body growth is to stimulate the liver and other tissues to secrete IGF1. It stimulates both the differentiation and proliferation of myoblasts. It also stimulates amino acid uptake and protein synthesis in muscle and other tissues. This is Somatotropin (GH1) from Monodelphis domestica (Gray short-tailed opossum).